The chain runs to 622 residues: Protein translocase subunit SecD (622 aa).

6 consecutive transmembrane segments (helical) span residues 6–26 (FKIGVTLALLLLCGYYLYPTV), 460–480 (AGLRSVLTGLLLVALFMIFYY), 485–505 (MIADLALVLNIIFILGILAAF), 512–532 (PGIAGIVLTIGMAVDANVLIF), 559–579 (AIFDANITTFFTAAILYSFGV), and 584–604 (GFAVTLMAGIAASLFSAIVIT).

Belongs to the SecD/SecF family. SecD subfamily. In terms of assembly, forms a complex with SecF. Part of the essential Sec protein translocation apparatus which comprises SecA, SecYEG and auxiliary proteins SecDF. Other proteins may also be involved.

The protein resides in the cell inner membrane. In terms of biological role, part of the Sec protein translocase complex. Interacts with the SecYEG preprotein conducting channel. SecDF uses the proton motive force (PMF) to complete protein translocation after the ATP-dependent function of SecA. This is Protein translocase subunit SecD from Rhodothermus marinus (strain ATCC 43812 / DSM 4252 / R-10) (Rhodothermus obamensis).